An 80-amino-acid polypeptide reads, in one-letter code: Acyl carrier protein (80 aa).

The Carrier domain maps to 4-79 (EAILEKVRSI…DAVKYIEEKQ (76 aa)). Ser39 carries the O-(pantetheine 4'-phosphoryl)serine modification.

Belongs to the acyl carrier protein (ACP) family. In terms of processing, 4'-phosphopantetheine is transferred from CoA to a specific serine of apo-ACP by AcpS. This modification is essential for activity because fatty acids are bound in thioester linkage to the sulfhydryl of the prosthetic group.

The protein localises to the cytoplasm. It participates in lipid metabolism; fatty acid biosynthesis. In terms of biological role, carrier of the growing fatty acid chain in fatty acid biosynthesis. The protein is Acyl carrier protein of Prochlorococcus marinus (strain NATL1A).